A 314-amino-acid polypeptide reads, in one-letter code: Methionyl-tRNA formyltransferase (314 aa).

110-113 (SLLP) is a binding site for (6S)-5,6,7,8-tetrahydrofolate.

Belongs to the Fmt family.

It carries out the reaction L-methionyl-tRNA(fMet) + (6R)-10-formyltetrahydrofolate = N-formyl-L-methionyl-tRNA(fMet) + (6S)-5,6,7,8-tetrahydrofolate + H(+). Functionally, attaches a formyl group to the free amino group of methionyl-tRNA(fMet). The formyl group appears to play a dual role in the initiator identity of N-formylmethionyl-tRNA by promoting its recognition by IF2 and preventing the misappropriation of this tRNA by the elongation apparatus. This is Methionyl-tRNA formyltransferase from Bacillus cereus (strain AH187).